The chain runs to 307 residues: MVPVHAHDYVTDPPSTTGRTLDGLTLPRVFADAVHRGGDAVALVDGEYALTWSAWRTAVDALARGLQESGVVSGDVVALHLPNSWEYLTLHLAAASVGAVTMPVHQGNAPSDVRALLERVRPAAVVLTARTQEGGGPLTGPALREVLPELRAVLVTGDAAGEGTETVTEMLERWSGEDPLPVEVRPDSPFLLLPSSGTTSARPKICLHSHEGLLTNSRAATEDTADAYAGTLITACPLTHCFGLQSAYSALFRAGRQVLLSGWDVGRFLELARRERPSVVVAVPASCTTWSPGCARTRTAPASARPD.

The protein belongs to the ATP-dependent AMP-binding enzyme family.

It participates in antibiotic biosynthesis; candicidin biosynthesis. Functionally, may be a p-aminobenzoic acid-CoA ligase that activates PabA to start the biosynthesis of candicidin. The polypeptide is Protein Y (Streptomyces griseus).